A 329-amino-acid chain; its full sequence is 2,3,4,5-tetrahydropyridine-2,6-dicarboxylate N-succinyltransferase (329 aa).

Residues Asp177 and Glu194 each coordinate Mg(2+). The active-site Acyl-anhydride intermediate is Glu210. Residues Arg212, Gly227, Ser230, Ala253, 268-269 (EA), Gly276, Lys288, and 301-304 (RRNS) each bind succinyl-CoA.

Belongs to the type 2 tetrahydrodipicolinate N-succinyltransferase family. As to quaternary structure, homotrimer.

The protein localises to the cytoplasm. It carries out the reaction (S)-2,3,4,5-tetrahydrodipicolinate + succinyl-CoA + H2O = (S)-2-succinylamino-6-oxoheptanedioate + CoA. It functions in the pathway amino-acid biosynthesis; L-lysine biosynthesis via DAP pathway; LL-2,6-diaminopimelate from (S)-tetrahydrodipicolinate (succinylase route): step 1/3. Catalyzes the conversion of the cyclic tetrahydrodipicolinate (THDP) into the acyclic N-succinyl-L-2-amino-6-oxopimelate using succinyl-CoA. The chain is 2,3,4,5-tetrahydropyridine-2,6-dicarboxylate N-succinyltransferase from Streptomyces coelicolor (strain ATCC BAA-471 / A3(2) / M145).